A 126-amino-acid chain; its full sequence is MARIAGIDIPSDKRVVIALTYIYGLGNKLSHKILNELKIDQNIRVKNLTEQQLSALRIEITKYNVEGDLRREVTLNIKRLMEIGAYRGLRHRKGLPVRGQKTRNNAHTVKGKPKAAIAGKKKNKVN.

The tract at residues glycine 94–asparagine 126 is disordered. Residues valine 109–asparagine 126 are compositionally biased toward basic residues.

The protein belongs to the universal ribosomal protein uS13 family. Part of the 30S ribosomal subunit. Forms a loose heterodimer with protein S19. Forms two bridges to the 50S subunit in the 70S ribosome.

Functionally, located at the top of the head of the 30S subunit, it contacts several helices of the 16S rRNA. In the 70S ribosome it contacts the 23S rRNA (bridge B1a) and protein L5 of the 50S subunit (bridge B1b), connecting the 2 subunits; these bridges are implicated in subunit movement. Contacts the tRNAs in the A and P-sites. The chain is Small ribosomal subunit protein uS13 from Aster yellows witches'-broom phytoplasma (strain AYWB).